A 290-amino-acid polypeptide reads, in one-letter code: Multiple sugar-binding transport system permease protein MsmF (290 aa).

A run of 7 helical transmembrane segments spans residues 12–32, 72–92, 104–124, 156–176, 201–221, 231–253, and 260–280; these read GWTF…FPMF, FTLV…IIIA, FFRA…SLIF, VIAS…ILFL, FWSV…IMAL, IFAL…VYNY, and YGYA…VSVL. Residues 70–281 enclose the ABC transmembrane type-1 domain; it reads IGFTLVLTLA…IIIGIVSVLQ (212 aa).

Belongs to the binding-protein-dependent transport system permease family. MalFG subfamily.

It localises to the cell membrane. Functionally, involved in a binding protein-dependent transport system responsible for the uptake of melibiose, raffinose and isomaltotriose. In Streptococcus mutans serotype c (strain ATCC 700610 / UA159), this protein is Multiple sugar-binding transport system permease protein MsmF (msmF).